The following is a 1305-amino-acid chain: Contactin-associated protein like 5-4 (1305 aa).

A signal peptide spans 1–24 (MNSVRRLNSILTLVLSGLWHLGLT). The Extracellular segment spans residues 25-1237 (ATNYNCDEPL…LTDTVQSDSA (1213 aa)). Residues 30-174 (CDEPLASFLS…IGMRVEVYGC (145 aa)) enclose the F5/8 type C domain. C30 and C174 are oxidised to a cystine. Laminin G-like domains lie at 180-360 (IVGF…TFSC) and 367-544 (PITF…IDLC). N282 is a glycosylation site (N-linked (GlcNAc...) asparagine). A disulfide bond links C329 and C360. N496 carries an N-linked (GlcNAc...) asparagine glycan. 3 disulfide bridges follow: C512–C544, C550–C561, and C555–C570. An EGF-like 1 domain is found at 546–583 (IKDRCLPNYCEHGGHCAQNWTTFYCNCSDTGYTGATCH). N571 carries an N-linked (GlcNAc...) asparagine glycan. C572 and C582 are oxidised to a cystine. Residues 584 to 790 (DSVYEQSCEV…LRCYGDRHFW (207 aa)) enclose the Fibrinogen C-terminal domain. N622 is a glycosylation site (N-linked (GlcNAc...) asparagine). A Laminin G-like 3 domain is found at 791–956 (NAVSFTTEAS…KLMSGVTPGC (166 aa)). 4 cysteine pairs are disulfide-bonded: C929–C956, C960–C973, C967–C982, and C984–C994. The region spanning 957-995 (LGHCSSYGSNCLNGGKCVEKQSGYSCDCTNSPNEGPFCQ) is the EGF-like 2 domain. The 185-residue stretch at 1014 to 1198 (EPYLVIKNTS…VQGTLTESGC (185 aa)) folds into the Laminin G-like 4 domain. N1057 is a glycosylation site (N-linked (GlcNAc...) asparagine). C1163 and C1198 form a disulfide bridge. A helical membrane pass occupies residues 1238–1258 (VIGGIIALVTFVTFCVIGIMI). Over 1259–1305 (HFLYLHKQSHCTNQTKEKEYSENLSNSFRNAIDLQNTASECKREYFI) the chain is Cytoplasmic.

The protein belongs to the neurexin family.

It is found in the membrane. May play a role in the correct development and proper functioning of the peripheral and central nervous system and be involved in cell adhesion and intercellular communication. The sequence is that of Contactin-associated protein like 5-4 (Cntnap5d) from Rattus norvegicus (Rat).